We begin with the raw amino-acid sequence, 87 residues long: UPF0335 protein Meso_3367 (87 aa).

This sequence belongs to the UPF0335 family.

The protein is UPF0335 protein Meso_3367 of Chelativorans sp. (strain BNC1).